The chain runs to 470 residues: Uronate isomerase (470 aa).

The protein belongs to the metallo-dependent hydrolases superfamily. Uronate isomerase family.

It catalyses the reaction D-glucuronate = D-fructuronate. The enzyme catalyses aldehydo-D-galacturonate = keto-D-tagaturonate. It functions in the pathway carbohydrate metabolism; pentose and glucuronate interconversion. The polypeptide is Uronate isomerase (Escherichia coli O17:K52:H18 (strain UMN026 / ExPEC)).